Reading from the N-terminus, the 99-residue chain is Putative RNA-binding protein RbpE (99 aa).

An RRM domain is found at 2 to 79 (SIYVGNLSYS…RVLKVNKARP (78 aa)). The tract at residues 78–99 (RPREEKGARSGGGSWSRNNGGY) is disordered. Over residues 86-99 (RSGGGSWSRNNGGY) the composition is skewed to gly residues.

The chain is Putative RNA-binding protein RbpE (rbpE) from Nostoc sp. (strain PCC 7120 / SAG 25.82 / UTEX 2576).